The primary structure comprises 396 residues: Peroxisome proliferator-activated receptor delta (396 aa).

Residues 1–24 (MKEEIPPRSPILDEQPSTPLEHQE) form a disordered region. Residues 15-24 (QPSTPLEHQE) show a composition bias toward polar residues. The nuclear receptor DNA-binding region spans 28 to 102 (SVDCKICGDR…LGMSHNAIRF (75 aa)). 2 consecutive NR C4-type zinc fingers follow at residues 31–51 (CKICGDRASGFHYGVHACEGC) and 68–90 (CDRNCKIQKKNRNKCQYCRFNKC). The 229-residue stretch at 166–394 (FVIHDMDTLW…HPLLQEIYRD (229 aa)) folds into the NR LBD domain.

Belongs to the nuclear hormone receptor family. NR1 subfamily. As to quaternary structure, heterodimer with the retinoid X receptor. In terms of processing, 'Lys-48'-linked polyubiquitinated; leading to proteasomal degradation. Deubiquitinated and stabilized by OTUD3. In terms of tissue distribution, ubiquitous.

It is found in the nucleus. In terms of biological role, ligand-activated transcription factor key mediator of energy metabolism in adipose tissues. Receptor that binds peroxisome proliferators such as hypolipidemic drugs and fatty acids. Has a preference for poly-unsaturated fatty acids, such as gamma-linoleic acid and eicosapentanoic acid. Once activated by a ligand, the receptor binds to promoter elements of target genes. Regulates the peroxisomal beta-oxidation pathway of fatty acids. Functions as a transcription activator for the acyl-CoA oxidase gene. Decreases expression of NPC1L1 once activated by a ligand. This chain is Peroxisome proliferator-activated receptor delta (ppard), found in Xenopus laevis (African clawed frog).